A 37-amino-acid polypeptide reads, in one-letter code: Photosystem II reaction center protein T (37 aa).

A helical membrane pass occupies residues 3–23; it reads ALVYTFLLVSTLGILFFAIFF.

This sequence belongs to the PsbT family. As to quaternary structure, PSII is composed of 1 copy each of membrane proteins PsbA, PsbB, PsbC, PsbD, PsbE, PsbF, PsbH, PsbI, PsbJ, PsbK, PsbL, PsbM, PsbT, PsbY, PsbZ, Psb30/Ycf12, at least 3 peripheral proteins of the oxygen-evolving complex and a large number of cofactors. It forms dimeric complexes.

It localises to the plastid. The protein resides in the chloroplast thylakoid membrane. Found at the monomer-monomer interface of the photosystem II (PS II) dimer, plays a role in assembly and dimerization of PSII. PSII is a light-driven water plastoquinone oxidoreductase, using light energy to abstract electrons from H(2)O, generating a proton gradient subsequently used for ATP formation. The protein is Photosystem II reaction center protein T of Ephedra sinica (Chinese ephedra).